Consider the following 395-residue polypeptide: Protein BTN1 (395 aa).

Residues 1–31 form the signal peptide; that stretch reads MQLEPAHLVYAAFWTFGLVNNVLYVVILTAA. Helical transmembrane passes span 43–63, 74–94, 96–116, 134–154, 158–178, 222–242, 261–278, 291–311, 313–333, and 355–375; these read VVLLADVLPSFLIKLAAPFFI, LLVGLSTVGMMSVSLASPLFL, LVGVVLASFSSGLGEVTFLQL, GAGLVGSGLFMLLTTVLGVSV, LLVFAFFPLAFLGVYFYLLPP, PLVMPYMLPLFLVYFSEYTIN, FRDVYVTYGTLYQLGVFI, IMIPSVLQFANLVFCIAQSMS, ILPNVWLVFILIFYEGLLGGA, and LGSVGMSDSAGIVLAGLVSLW.

This sequence belongs to the battenin family.

It localises to the vacuole membrane. Functionally, involved in vacuolar transport and vacuole pH homeostasis. Also required for cytokinesis. This is Protein BTN1 (BTN1) from Yarrowia lipolytica (strain CLIB 122 / E 150) (Yeast).